Here is a 518-residue protein sequence, read N- to C-terminus: GMP synthase [glutamine-hydrolyzing] (518 aa).

The Glutamine amidotransferase type-1 domain occupies 13–203 (KIIVLDFGSQ…ALNVCGCKGD (191 aa)). C90 functions as the Nucleophile in the catalytic mechanism. Residues H177 and E179 contribute to the active site. The GMPS ATP-PPase domain maps to 204–393 (WTMENFSEVE…LGMPDAIVWR (190 aa)). 231 to 237 (SGGVDSS) is a binding site for ATP.

In terms of assembly, homodimer.

The enzyme catalyses XMP + L-glutamine + ATP + H2O = GMP + L-glutamate + AMP + diphosphate + 2 H(+). Its pathway is purine metabolism; GMP biosynthesis; GMP from XMP (L-Gln route): step 1/1. Catalyzes the synthesis of GMP from XMP. In Listeria welshimeri serovar 6b (strain ATCC 35897 / DSM 20650 / CCUG 15529 / CIP 8149 / NCTC 11857 / SLCC 5334 / V8), this protein is GMP synthase [glutamine-hydrolyzing].